A 124-amino-acid chain; its full sequence is 5-hydroxyisourate hydrolase (124 aa).

Substrate-binding residues include H15, R53, and Y121.

Belongs to the transthyretin family. 5-hydroxyisourate hydrolase subfamily. As to quaternary structure, homotetramer.

The enzyme catalyses 5-hydroxyisourate + H2O = 5-hydroxy-2-oxo-4-ureido-2,5-dihydro-1H-imidazole-5-carboxylate + H(+). Catalyzes the hydrolysis of 5-hydroxyisourate (HIU) to 2-oxo-4-hydroxy-4-carboxy-5-ureidoimidazoline (OHCU). This chain is 5-hydroxyisourate hydrolase, found in Mesorhizobium japonicum (strain LMG 29417 / CECT 9101 / MAFF 303099) (Mesorhizobium loti (strain MAFF 303099)).